Here is a 313-residue protein sequence, read N- to C-terminus: Porphobilinogen deaminase (313 aa).

S-(dipyrrolylmethanemethyl)cysteine is present on C242.

Belongs to the HMBS family. Monomer. Dipyrromethane is required as a cofactor.

The enzyme catalyses 4 porphobilinogen + H2O = hydroxymethylbilane + 4 NH4(+). Its pathway is porphyrin-containing compound metabolism; protoporphyrin-IX biosynthesis; coproporphyrinogen-III from 5-aminolevulinate: step 2/4. In terms of biological role, tetrapolymerization of the monopyrrole PBG into the hydroxymethylbilane pre-uroporphyrinogen in several discrete steps. The protein is Porphobilinogen deaminase of Klebsiella pneumoniae subsp. pneumoniae (strain ATCC 700721 / MGH 78578).